Here is a 569-residue protein sequence, read N- to C-terminus: MAETKVNFSDKLDEMERIKAHSDYLRGSIVQGLADRVTGAIAEEDTKLLKFHGSYMQDDRDIRDERRRQKLEPAYSFMIRVRAPGGASTAEQWIAMDDIANTYANGTIKLTTRQAFQFHGILKRNLKQTMKDINQSLLDTLAACGDVNRNVMCNPNPYQSDVHSEINQIASAISRHLSPKTQAYHEIWLDGEKVLDTSDEEPEPIYGKTYLPRKFKIGIAVPPSNDIDVYSQDIGLIAILENEQLVGFNVAVGGGMGMKHGNTATYPQVGRLIGYIPKEEVVDVCEKILTVQRDYGNREERTNARFKYTVDRLGVDWIRNEINNRLGWQLENKRPYHFEHNGDRYGWTEGSGKWHYTLFVQNGRVKDTEDYKLKTALRTIAEVHTGDFRLTPNQNLVIANVAAHKKNEIEKIITDFGITDGQHYTGLRRNSMACVAFPTCGLAMAESERYLPSLITKIEDLLDEAGLKEEEITIRMTGCPNGCARPALAEVAFIGKGPGKYNMYLGGGFIGDRLNKIYKENIGEAEILESLRPILLQYAKERTEGEHFGDFVVRAGIVEEVRDGQTFHS.

Residues Cys-434, Cys-440, Cys-479, and Cys-483 each coordinate [4Fe-4S] cluster. Cys-483 lines the siroheme pocket.

The protein belongs to the nitrite and sulfite reductase 4Fe-4S domain family. Alpha(8)-beta(8). The alpha component is a flavoprotein, the beta component is a hemoprotein. Siroheme is required as a cofactor. [4Fe-4S] cluster serves as cofactor.

It catalyses the reaction hydrogen sulfide + 3 NADP(+) + 3 H2O = sulfite + 3 NADPH + 4 H(+). The protein operates within sulfur metabolism; hydrogen sulfide biosynthesis; hydrogen sulfide from sulfite (NADPH route): step 1/1. In terms of biological role, component of the sulfite reductase complex that catalyzes the 6-electron reduction of sulfite to sulfide. This is one of several activities required for the biosynthesis of L-cysteine from sulfate. The protein is Sulfite reductase [NADPH] hemoprotein beta-component of Staphylococcus saprophyticus subsp. saprophyticus (strain ATCC 15305 / DSM 20229 / NCIMB 8711 / NCTC 7292 / S-41).